The chain runs to 428 residues: Chaperone SurA (428 aa).

The first 13 residues, 1 to 13 (MLGALLLSGAVHA), serve as a signal peptide directing secretion. 2 PpiC domains span residues 164-265 (SEEF…KLLE) and 276-375 (RDEV…EVLG). Residues 211–230 (TSSSSENALEGGDMGWRKAA) form a disordered region.

The protein resides in the periplasm. It carries out the reaction [protein]-peptidylproline (omega=180) = [protein]-peptidylproline (omega=0). Its function is as follows. Chaperone involved in the correct folding and assembly of outer membrane proteins. Recognizes specific patterns of aromatic residues and the orientation of their side chains, which are found more frequently in integral outer membrane proteins. May act in both early periplasmic and late outer membrane-associated steps of protein maturation. The chain is Chaperone SurA from Pseudomonas syringae pv. syringae (strain B728a).